The sequence spans 543 residues: Keratin, type II cytoskeletal 75 (543 aa).

Polar residues predominate over residues 1–16 (MSRQSTITFQTSSRRG). The segment at 1–48 (MSRQSTITFQTSSRRGFSTASATTPATSRSRFSSASVTHSPAGSGGLG) is disordered. Positions 1 to 144 (MSRQSTITFQ…DPNIQRVRKE (144 aa)) are head. Positions 17–36 (FSTASATTPATSRSRFSSAS) are enriched in low complexity. The tract at residues 145 to 180 (EREQIKTLNNKFASFIDKVRFLEQQNKVLETKWSLL) is coil 1A. An IF rod domain is found at 145–458 (EREQIKTLNN…KLLEGEECRL (314 aa)). Positions 181-199 (QEQGTRTVRQSLEPFFEAY) are linker 1. Residues 200–292 (ITDLRRQLDS…LFEAELCQMQ (93 aa)) are coil 1B. The linker 12 stretch occupies residues 293-315 (TRVSDTSVVLSMDNNRSLDLDSI). The coil 2 stretch occupies residues 316–454 (IAEVKAQYEE…ATYRKLLEGE (139 aa)). The tract at residues 455–543 (ECRLSGEGVS…TSSSRKSYKH (89 aa)) is tail. The segment at 511 to 543 (SSFSNSSSRGLGGSGSSFKFVSTTSSSRKSYKH) is disordered. The span at 526–543 (SSFKFVSTTSSSRKSYKH) shows a compositional bias: low complexity.

Belongs to the intermediate filament family. In terms of assembly, heterodimer of a type I and a type II keratin. May associate with KRT17.

Functionally, plays a central role in hair and nail formation. Essential component of keratin intermediate filaments in the companion layer of the hair follicle. The chain is Keratin, type II cytoskeletal 75 (KRT75) from Bos taurus (Bovine).